A 174-amino-acid polypeptide reads, in one-letter code: Ribosome maturation factor RimM (174 aa).

The region spanning Lys96–Leu169 is the PRC barrel domain.

It belongs to the RimM family. In terms of assembly, binds ribosomal protein uS19.

The protein resides in the cytoplasm. Its function is as follows. An accessory protein needed during the final step in the assembly of 30S ribosomal subunit, possibly for assembly of the head region. Essential for efficient processing of 16S rRNA. May be needed both before and after RbfA during the maturation of 16S rRNA. It has affinity for free ribosomal 30S subunits but not for 70S ribosomes. The chain is Ribosome maturation factor RimM from Acetivibrio thermocellus (strain ATCC 27405 / DSM 1237 / JCM 9322 / NBRC 103400 / NCIMB 10682 / NRRL B-4536 / VPI 7372) (Clostridium thermocellum).